We begin with the raw amino-acid sequence, 833 residues long: Disintegrin and metalloproteinase domain-containing protein 17 (833 aa).

Positions 1 to 17 (MRQCALFLTSLVPIVLA) are cleaved as a signal peptide. Positions 223 to 474 (NTCKLLVVAD…KAQECFQERS (252 aa)) constitute a Peptidase M12B domain. Residues 301–345 (AKSYPNEEKDAWDVKMLLEQFSFDIAEEASKVCLAHLFTYQDFDM) are interaction with classical swine fever virus envelope glycoprotein E2. 3 cysteine pairs are disulfide-bonded: Cys-365–Cys-469, Cys-423–Cys-453, and Cys-534–Cys-555. His-405 is a binding site for Zn(2+). The active site involves Glu-406. Residues His-409 and His-415 each coordinate Zn(2+). In terms of domain architecture, Disintegrin spans 475 to 563 (NKVCGNSRVD…ECPPPGNAED (89 aa)). The chain crosses the membrane as a helical span at residues 672-692 (IVGSVLVFSLMLWIPVSILVH). Disordered stretches follow at residues 735–760 (TPGR…VPVA) and 772–833 (QEDP…ETEC). Basic and acidic residues-rich tracts occupy residues 777–790 (TDSH…EKDP), 800–816 (SFED…EKAS), and 824–833 (SRVDSKETEC).

(Microbial infection) Interacts (via metalloproteinase domain) with classical swine fever virus envelope glycoprotein E2; this interaction allows binding and probably entry of the virus into the cell. As to quaternary structure, interacts with MAD2L1, MAPK14 and MUC1. Interacts with iRhom1/RHBDF1 and iRhom2/RHBDF2. Interacts with FRMD8 via its interaction with iRhom1/RHBDF1 and iRhom2/RHBDF2. It depends on Zn(2+) as a cofactor. In terms of processing, the precursor is cleaved by a furin endopeptidase. Phosphorylated.

The protein localises to the membrane. It catalyses the reaction Narrow endopeptidase specificity. Cleaves Pro-Leu-Ala-Gln-Ala-|-Val-Arg-Ser-Ser-Ser in the membrane-bound, 26-kDa form of tumor necrosis factor alpha (TNFalpha). Similarly cleaves other membrane-anchored, cell-surface proteins to 'shed' the extracellular domains.. In terms of biological role, transmembrane metalloprotease which mediates the ectodomain shedding of a myriad of transmembrane proteins including adhesion proteins, growth factor precursors and cytokines important for inflammation and immunity. Cleaves the membrane-bound precursor of TNF-alpha to its mature soluble form. Responsible for the proteolytical release of soluble JAM3 from endothelial cells surface. Responsible for the proteolytic release of several other cell-surface proteins, including p75 TNF-receptor, interleukin 1 receptor type II, p55 TNF-receptor, transforming growth factor-alpha, L-selectin, growth hormone receptor, MUC1 and the amyloid precursor protein. Acts as an activator of Notch pathway by mediating cleavage of Notch, generating the membrane-associated intermediate fragment called Notch extracellular truncation (NEXT). Plays a role in the proteolytic processing of ACE2. Plays a role in hemostasis through shedding of GP1BA, the platelet glycoprotein Ib alpha chain. Mediates the proteolytic cleavage of LAG3, leading to release the secreted form of LAG3. Mediates the proteolytic cleavage of IL6R, leading to the release of secreted form of IL6R. Mediates the proteolytic cleavage and shedding of FCGR3A upon NK cell stimulation, a mechanism that allows for increased NK cell motility and detachment from opsonized target cells. Cleaves TREM2, resulting in shedding of the TREM2 ectodomain. Functionally, (Microbial infection) Acts as a receptor for classical swine fever virus. This chain is Disintegrin and metalloproteinase domain-containing protein 17 (ADAM17), found in Sus scrofa (Pig).